A 263-amino-acid polypeptide reads, in one-letter code: MQLYRGMDIGTAKLPPGEWRGLPHHLFDVLDVTDEAAVARYQPEARRVVQEIRERGSTPILVGGSGLYVSSVVFDFRFPGTDTALRARLEAELAAQGPGTLFQRLLARDPEAAKRIGSSNGRRIVRALEVAELTGAAVSGALPEEPKPWVPVRVLGLAAPREELVQRLDARVERMWAEGLLAEVEGLIPLGIERSVTARRAIGYAQALAELTGELTRSQAQAQTQRLTRRYARRQLSWFKRYPGIHWLDYDDPQLVAAALARL.

It belongs to the IPP transferase family. Monomer. The cofactor is Mg(2+).

The enzyme catalyses adenosine(37) in tRNA + dimethylallyl diphosphate = N(6)-dimethylallyladenosine(37) in tRNA + diphosphate. Catalyzes the transfer of a dimethylallyl group onto the adenine at position 37 in tRNAs that read codons beginning with uridine, leading to the formation of N6-(dimethylallyl)adenosine (i(6)A). The polypeptide is tRNA dimethylallyltransferase (Leifsonia xyli subsp. xyli (strain CTCB07)).